Consider the following 978-residue polypeptide: MSVEIVPLPLRINENESFLSYDDRLNRVVFKTSSGFGVVLLDDPEANRRYYSSDKPIIDAKFSPDLKYSAIQFSDYDIEILHLENGTRYIQTCKYKSSKATILGYYWTTKENILLVTNASLELYAMGLDGSCKLVKESKIKITNCVYSFNCNFGVLFLHSGGTSIQPYFFRTNSFDKLPKFNIEGNGNGFNIKNLYVTKLHEKFFCVYGDQEYIYLYEMTLETIYKIKPIKILLSGPNSIHFVDNLIIVHSELNISIVYDLKTIQRDRERGQTNKKEPEFPISAIPMTLSTINSNNLLYLMNNATKTHSTTSTPIINSINNNNNNNNNPSSSSSPSSSNNSQSSSPTMISSYEQRQIDQHKEQQLQKPNVTLYSKNWRFICPNYIFDPDSGIWYEVTLNFEKISNFLQFDSHKTIPFLQERTLLSAKFALLSIIKTIIEFKTDTLDGIGKIYDDLNKVLFRTTNRQLTESLHKSINQPNNNNNNNNNNNNNNNNNTAQTLNSTGNLSNSISIGGMNTSTDNLTTTTTTSSSISSSPSNSFIGNSKTNVNNLSYLNYKKQQQQQMEKQQHMPNDDEDSFSLIGDGGSGGSGGSFYNTNTNTTSTTNTTTSPSGKSNSNLKLSQSLNNTPNQSPNSRSSLNNSSNNINNNNNNNNNNNNNNNNNNHVVQNRQSRSNQYILINSHDMYDFVFNPIYEKLLIESQKEKEKENDNNNNNTNNNTNNNNNNNIEELNSNEKLELDSKYLIAVVIQYIKSLSFNHCTGISDKLYNLLISLLIDNNMFSRLHQFLQYYVITDSLSIAYKLLSIGEQYPPVLQLSLDMFKRLSMPNIIIETLLERGQVIQAIRLLRSTKETNEQAYQELLTPTYPIQFLASSSNQSNDTLFFSVFKFFETNNLIIPSHPSFDKYIKLFIEKFTEKSLSPLLLDILSNLNNNSTSGGDITPKKNVGGSFLNQSLNNSSPTLRSSNSLNSSPRLQYSNN.

2 stretches are compositionally biased toward low complexity: residues 311-351 (TSTP…MISS) and 479-495 (NNNN…NNNN). Disordered stretches follow at residues 311–363 (TSTP…HKEQ), 474–546 (SINQ…NSKT), 558–665 (KQQQ…NNHV), and 703–727 (EKEK…NNNI). Residues 496-515 (TAQTLNSTGNLSNSISIGGM) show a composition bias toward polar residues. Over residues 516 to 539 (NTSTDNLTTTTTTSSSISSSPSNS) the composition is skewed to low complexity. The span at 582–591 (GDGGSGGSGG) shows a compositional bias: gly residues. Composition is skewed to low complexity over residues 592–663 (SFYN…NNNN) and 710–727 (NNNN…NNNI). The region spanning 735–908 (KLELDSKYLI…HPSFDKYIKL (174 aa)) is the Mic1 domain. Positions 955 to 978 (NNSSPTLRSSNSLNSSPRLQYSNN) are disordered.

This sequence belongs to the RMC1 family.

The protein resides in the lysosome membrane. It is found in the late endosome membrane. Functionally, may have a role in autophagy. This chain is Regulator of MON1-CCZ1 complex homolog, found in Dictyostelium discoideum (Social amoeba).